Consider the following 218-residue polypeptide: Cytochrome b6 (218 aa).

The chain crosses the membrane as a helical span at residues 35-55 (IFYCLGGITLVCFLIQFATGF). C38 is a binding site for heme c. Heme b contacts are provided by H89 and H103. Transmembrane regions (helical) follow at residues 93–113 (ASMM…TGGF), 119–139 (LTWV…VTGY), and 189–209 (LHTF…FLMI). H190 and H205 together coordinate heme b.

Belongs to the cytochrome b family. PetB subfamily. As to quaternary structure, the 4 large subunits of the cytochrome b6-f complex are cytochrome b6, subunit IV (17 kDa polypeptide, PetD), cytochrome f and the Rieske protein, while the 4 small subunits are PetG, PetL, PetM and PetN. The complex functions as a dimer. The cofactor is heme b. Heme c is required as a cofactor.

Its subcellular location is the cellular thylakoid membrane. Component of the cytochrome b6-f complex, which mediates electron transfer between photosystem II (PSII) and photosystem I (PSI), cyclic electron flow around PSI, and state transitions. In Prochlorococcus marinus (strain SARG / CCMP1375 / SS120), this protein is Cytochrome b6.